A 438-amino-acid polypeptide reads, in one-letter code: Transmembrane protein 184C (438 aa).

Transmembrane regions (helical) follow at residues 17–37 (LAVV…VWEL), 48–68 (AWFI…WVIL), 86–106 (ILWM…YPSI), 176–196 (VLQY…CELL), 212–232 (YLVI…LLFY), 254–274 (VVFV…VGVI), and 287–307 (AVAT…AAIA). The tract at residues 358 to 438 (PRKKFFPEDQ…EEPSEKPVAS (81 aa)) is disordered. Composition is skewed to low complexity over residues 374–390 (SLLS…ASSV) and 404–413 (TVTPQTTPTT). Residues 426 to 438 (GVREEPSEKPVAS) show a composition bias toward basic and acidic residues.

The protein belongs to the TMEM184 family.

It localises to the membrane. Possible tumor suppressor which may play a role in cell growth. This chain is Transmembrane protein 184C (TMEM184C), found in Bos taurus (Bovine).